The chain runs to 374 residues: Lipid-A-disaccharide synthase (374 aa).

It belongs to the LpxB family.

The enzyme catalyses a lipid X + a UDP-2-N,3-O-bis[(3R)-3-hydroxyacyl]-alpha-D-glucosamine = a lipid A disaccharide + UDP + H(+). The protein operates within bacterial outer membrane biogenesis; LPS lipid A biosynthesis. Functionally, condensation of UDP-2,3-diacylglucosamine and 2,3-diacylglucosamine-1-phosphate to form lipid A disaccharide, a precursor of lipid A, a phosphorylated glycolipid that anchors the lipopolysaccharide to the outer membrane of the cell. The protein is Lipid-A-disaccharide synthase of Pseudomonas fluorescens (strain ATCC BAA-477 / NRRL B-23932 / Pf-5).